We begin with the raw amino-acid sequence, 208 residues long: Uracil phosphoribosyltransferase (208 aa).

Residues Arg-78, Arg-103, and 130–138 contribute to the 5-phospho-alpha-D-ribose 1-diphosphate site; that span reads DPMFATGGT. Uracil-binding positions include Ile-193 and 198–200; that span reads GDA. Asp-199 contributes to the 5-phospho-alpha-D-ribose 1-diphosphate binding site.

This sequence belongs to the UPRTase family. Mg(2+) serves as cofactor.

The enzyme catalyses UMP + diphosphate = 5-phospho-alpha-D-ribose 1-diphosphate + uracil. Its pathway is pyrimidine metabolism; UMP biosynthesis via salvage pathway; UMP from uracil: step 1/1. Allosterically activated by GTP. Its function is as follows. Catalyzes the conversion of uracil and 5-phospho-alpha-D-ribose 1-diphosphate (PRPP) to UMP and diphosphate. In Campylobacter curvus (strain 525.92), this protein is Uracil phosphoribosyltransferase.